Reading from the N-terminus, the 87-residue chain is Apolipoprotein C-I (87 aa).

An N-terminal signal peptide occupies residues 1-26; it reads MRLILSLPVLAVVLAMVLEGPAPAQA.

This sequence belongs to the apolipoprotein C1 family.

The protein resides in the secreted. Its function is as follows. Inhibitor of lipoprotein binding to the low density lipoprotein (LDL) receptor, LDL receptor-related protein, and very low density lipoprotein (VLDL) receptor. Associates with high density lipoproteins (HDL) and the triacylglycerol-rich lipoproteins in the plasma and makes up about 10% of the protein of the VLDL and 2% of that of HDL. Appears to interfere directly with fatty acid uptake and is also the major plasma inhibitor of cholesteryl ester transfer protein (CETP). Binds free fatty acids and reduces their intracellular esterification. Modulates the interaction of APOE with beta-migrating VLDL and inhibits binding of beta-VLDL to the LDL receptor-related protein. The chain is Apolipoprotein C-I (APOC1) from Pteropus vampyrus (Large flying fox).